A 238-amino-acid polypeptide reads, in one-letter code: Uridylate kinase (238 aa).

12–15 provides a ligand contact to ATP; the sequence is KLSG. Gly54 is a UMP binding site. The ATP site is built by Gly55 and Arg59. UMP is bound by residues Asp74 and 135–142; that span reads TGNPFFTT. ATP-binding residues include Thr162, Asn163, Tyr168, and Asp171.

It belongs to the UMP kinase family. In terms of assembly, homohexamer.

The protein localises to the cytoplasm. The enzyme catalyses UMP + ATP = UDP + ADP. It participates in pyrimidine metabolism; CTP biosynthesis via de novo pathway; UDP from UMP (UMPK route): step 1/1. Its activity is regulated as follows. Inhibited by UTP. Catalyzes the reversible phosphorylation of UMP to UDP. In Rhodopseudomonas palustris (strain BisB18), this protein is Uridylate kinase.